The following is a 1705-amino-acid chain: Receptor-type tyrosine-protein phosphatase V (1705 aa).

An N-terminal signal peptide occupies residues 1-18 (MRPLILLAALLWLQDSLA). Topologically, residues 19 to 1077 (QEDVCSSLDG…QASISLVAMP (1059 aa)) are extracellular. Residues 24-44 (SSLDGSPDRQGGGPPLSVSVT) are disordered. Fibronectin type-III domains lie at 37 to 129 (PPLS…TAPT), 130 to 222 (VVRG…VPPD), 218 to 305 (PVPP…EWTY), 306 to 388 (PSYP…SIWL), 393 to 454 (ARPM…HYRV), 475 to 569 (PPQS…APPT), 565 to 654 (PAPP…TGWT), 655 to 749 (PPSA…TPNE), 744 to 831 (PLTP…VLSV), and 832 to 926 (EPGP…SAEV). N-linked (GlcNAc...) asparagine glycosylation is found at asparagine 74, asparagine 89, asparagine 117, asparagine 174, asparagine 239, asparagine 259, asparagine 299, asparagine 345, asparagine 431, asparagine 551, asparagine 570, asparagine 620, asparagine 649, asparagine 663, and asparagine 737. N-linked (GlcNAc...) asparagine glycans are attached at residues asparagine 851, asparagine 882, asparagine 970, and asparagine 982. A helical transmembrane segment spans residues 1078–1100 (LTVMMGTVVGCIIIVCAVLCLLC). The Cytoplasmic segment spans residues 1101–1705 (RRGLKGPRSE…LRNRLPRARK (605 aa)). Tyrosine-protein phosphatase domains are found at residues 1150–1409 (FFQE…LLNK) and 1427–1695 (NFAQ…LNSA). Residues aspartate 1316, 1350 to 1356 (CSAGVGR), and glutamine 1394 contribute to the substrate site. Catalysis depends on cysteine 1350, which acts as the Phosphocysteine intermediate.

Belongs to the protein-tyrosine phosphatase family. Receptor class 3 subfamily.

It is found in the membrane. The catalysed reaction is O-phospho-L-tyrosyl-[protein] + H2O = L-tyrosyl-[protein] + phosphate. Functionally, protein tyrosine phosphatase that acts as a regulator of energy metabolism by mediating dephosphorylation of insulin receptor (Insr). Prevents decarboxylation of osteocalcin (Bglap and Bglap2) via an indirect mechanism: dephosphorylation of insulin receptor prevents insulin signaling-dependent decarboxylation of osteocalcin, preventing the hormone activity of osteocalcin. May play a role in the maintenance of pluripotency. This Mus musculus (Mouse) protein is Receptor-type tyrosine-protein phosphatase V (Ptprv).